Consider the following 248-residue polypeptide: Metallo-beta-lactamase type 2 (248 aa).

The first 21 residues, 1-21 (MKGLKGLLVLALGFTGLQVFG), serve as a signal peptide directing secretion. Residues H97, H99, D101, H160, and C179 each contribute to the Zn(2+) site. K182 contacts substrate. A Zn(2+)-binding site is contributed by H221.

This sequence belongs to the metallo-beta-lactamase superfamily. Class-B beta-lactamase family. Monomer. It depends on Zn(2+) as a cofactor.

The protein resides in the periplasm. The enzyme catalyses a beta-lactam + H2O = a substituted beta-amino acid. Its function is as follows. Confers resistance to the different beta-lactams antibiotics (penicillin, cephalosporin and carbapenem) via the hydrolysis of the beta-lactam ring. In Elizabethkingia meningoseptica (Chryseobacterium meningosepticum), this protein is Metallo-beta-lactamase type 2 (blaB8).